The chain runs to 107 residues: U1-lycotoxin-Ls1b (107 aa).

The first 20 residues, 1–20, serve as a signal peptide directing secretion; the sequence is MMKVLVVVALLVTHISYSSS. Residues 21–41 constitute a propeptide that is removed on maturation; sequence EGIDDLEADELLSLMANEQTR. Intrachain disulfides connect Cys44-Cys59, Cys51-Cys68, Cys58-Cys86, and Cys70-Cys84.

Belongs to the neurotoxin 19 (CSTX) family. 04 (U1-Lctx) subfamily. Expressed by the venom gland.

Its subcellular location is the secreted. The chain is U1-lycotoxin-Ls1b from Lycosa singoriensis (Wolf spider).